Reading from the N-terminus, the 595-residue chain is Aspartate--tRNA(Asp/Asn) ligase (595 aa).

Glu177 is an L-aspartate binding site. The aspartate stretch occupies residues Gln201–Lys204. Arg223 is a binding site for L-aspartate. Residues Arg223–Glu225 and Gln232 contribute to the ATP site. His455 lines the L-aspartate pocket. ATP is bound at residue Glu489. Arg496 contacts L-aspartate. ATP is bound at residue Gly542–Arg545.

It belongs to the class-II aminoacyl-tRNA synthetase family. Type 1 subfamily. In terms of assembly, homodimer.

Its subcellular location is the cytoplasm. The catalysed reaction is tRNA(Asx) + L-aspartate + ATP = L-aspartyl-tRNA(Asx) + AMP + diphosphate. In terms of biological role, aspartyl-tRNA synthetase with relaxed tRNA specificity since it is able to aspartylate not only its cognate tRNA(Asp) but also tRNA(Asn). Reaction proceeds in two steps: L-aspartate is first activated by ATP to form Asp-AMP and then transferred to the acceptor end of tRNA(Asp/Asn). This chain is Aspartate--tRNA(Asp/Asn) ligase, found in Opitutus terrae (strain DSM 11246 / JCM 15787 / PB90-1).